The following is a 423-amino-acid chain: MSYVIDRRLNGKNKSTVNRQRFLRRYRDHIKKAVEEAVSRRSITDMEHGEQISIPGRDIDEPVLHHGRGGKQTVVHPGNKEFTAGEHIARPPGGGGGRGPGKAGNSGEGMDEFVFQITQEEFLEFMFEDLELPNLVKRNLTGTDTFKTVRAGISNEGNPSRINIIRTLRSAHARRIALSGSSRAKLREVKEELARLKREEPDNFGDIQDLEAEIERLSARIHRVPFLDTFDLKYNLLVKQPNPSSKAVMFCLMDVSGSMTQATKDIAKRFFILLYLFLKRNYDKIDVVFIRHHTSAREVDEEEFFYSRETGGTIVSSALKLMQEIMAERYPSNEWNIYAAQASDGDNWNDDSPICRDILINQIMPFVQYYTYVEITPREHQALWYEYERIAEAFSDTFAQQQLVSAGDIYPVFRELFQRRLVT.

The segment at 83-108 (TAGEHIARPPGGGGGRGPGKAGNSGE) is disordered. Positions 92–107 (PGGGGGRGPGKAGNSG) are enriched in gly residues.

This sequence belongs to the UPF0229 family.

The sequence is that of UPF0229 protein Pfl01_5140 from Pseudomonas fluorescens (strain Pf0-1).